The primary structure comprises 393 residues: Chorismate synthase (393 aa).

2 residues coordinate NADP(+): arginine 40 and arginine 46. FMN contacts are provided by residues 129–131, 249–250, glycine 301, 316–320, and arginine 342; these read RSS, QA, and KPIPT.

The protein belongs to the chorismate synthase family. In terms of assembly, homotetramer. FMNH2 serves as cofactor.

It catalyses the reaction 5-O-(1-carboxyvinyl)-3-phosphoshikimate = chorismate + phosphate. It participates in metabolic intermediate biosynthesis; chorismate biosynthesis; chorismate from D-erythrose 4-phosphate and phosphoenolpyruvate: step 7/7. Functionally, catalyzes the anti-1,4-elimination of the C-3 phosphate and the C-6 proR hydrogen from 5-enolpyruvylshikimate-3-phosphate (EPSP) to yield chorismate, which is the branch point compound that serves as the starting substrate for the three terminal pathways of aromatic amino acid biosynthesis. This reaction introduces a second double bond into the aromatic ring system. The protein is Chorismate synthase of Geotalea uraniireducens (strain Rf4) (Geobacter uraniireducens).